The chain runs to 217 residues: Cytidylate kinase (217 aa).

10–18 provides a ligand contact to ATP; that stretch reads GPAGAGKST.

Belongs to the cytidylate kinase family. Type 1 subfamily.

The protein localises to the cytoplasm. The catalysed reaction is CMP + ATP = CDP + ADP. The enzyme catalyses dCMP + ATP = dCDP + ADP. The sequence is that of Cytidylate kinase from Clostridium botulinum (strain Loch Maree / Type A3).